We begin with the raw amino-acid sequence, 75 residues long: Translation initiation factor IF-1, chloroplastic (75 aa).

The protein belongs to the IF-1 family. As to quaternary structure, component of the 30S ribosomal translation pre-initiation complex which assembles on the 30S ribosome in the order IF-2 and IF-3, IF-1 and N-formylmethionyl-tRNA(fMet); mRNA recruitment can occur at any time during PIC assembly.

It localises to the plastid. The protein resides in the chloroplast. One of the essential components for the initiation of protein synthesis. Stabilizes the binding of IF-2 and IF-3 on the 30S subunit to which N-formylmethionyl-tRNA(fMet) subsequently binds. Helps modulate mRNA selection, yielding the 30S pre-initiation complex (PIC). Upon addition of the 50S ribosomal subunit IF-1, IF-2 and IF-3 are released leaving the mature 70S translation initiation complex. The polypeptide is Translation initiation factor IF-1, chloroplastic (infA) (Cucumis sativus (Cucumber)).